Here is a 176-residue protein sequence, read N- to C-terminus: Nucleoside triphosphate/diphosphate phosphatase (176 aa).

Catalysis depends on R23, which acts as the Proton donor. Mg(2+) contacts are provided by N87, D103, D105, D107, D120, and E123.

The protein belongs to the Ntdp family. The cofactor is Mg(2+).

The catalysed reaction is a ribonucleoside 5'-triphosphate + H2O = a ribonucleoside 5'-diphosphate + phosphate + H(+). It catalyses the reaction a ribonucleoside 5'-diphosphate + H2O = a ribonucleoside 5'-phosphate + phosphate + H(+). Functionally, has nucleoside phosphatase activity towards nucleoside triphosphates and nucleoside diphosphates. In Bacillus licheniformis (strain ATCC 14580 / DSM 13 / JCM 2505 / CCUG 7422 / NBRC 12200 / NCIMB 9375 / NCTC 10341 / NRRL NRS-1264 / Gibson 46), this protein is Nucleoside triphosphate/diphosphate phosphatase.